The following is a 142-amino-acid chain: Nucleoside diphosphate kinase (142 aa).

Residues Lys11, Phe59, Arg87, Thr93, Arg104, and Asn114 each contribute to the ATP site. His117 (pros-phosphohistidine intermediate) is an active-site residue.

Belongs to the NDK family. As to quaternary structure, homotetramer. Mg(2+) is required as a cofactor.

It is found in the cytoplasm. The catalysed reaction is a 2'-deoxyribonucleoside 5'-diphosphate + ATP = a 2'-deoxyribonucleoside 5'-triphosphate + ADP. It carries out the reaction a ribonucleoside 5'-diphosphate + ATP = a ribonucleoside 5'-triphosphate + ADP. Its function is as follows. Major role in the synthesis of nucleoside triphosphates other than ATP. The ATP gamma phosphate is transferred to the NDP beta phosphate via a ping-pong mechanism, using a phosphorylated active-site intermediate. This chain is Nucleoside diphosphate kinase, found in Yersinia pseudotuberculosis serotype I (strain IP32953).